The sequence spans 216 residues: Maintenance of carboxysome distribution protein A (216 aa).

ATP contacts are provided by Gly-18, Gly-19, Gly-21, Lys-22, Thr-23, Thr-24, and Gln-47. Thr-23 is a Mg(2+) binding site.

It belongs to the ParA family. McdA subfamily. In terms of assembly, homodimerizes in the presence of ATP. Each subunit binds 1 ATP molecule; some residues cross the dimer interface to contact ATP in the other subunit. Forms a complex with McdB.

Its subcellular location is the cytoplasm. It is found in the nucleoid. It catalyses the reaction ATP + H2O = ADP + phosphate + H(+). Its function is as follows. McdA and McdB together mediate carboxysome (Cb) spacing, size, ultrastructure and probably inheritance in the cell, together they prevent Cb aggregation. McdA is an ATPase that forms dynamic gradients on the nucleoid in response to adapter protein McdB, which associates with carboxysomes. The interplay between McdA gradients on the nucleoid and McdB-bound carboxysomes result in the equal spacing of Cbs along the cell length. Functionally, incorrect positioning (aggregation) of carboxysomes results in reduced CO(2) fixation by encapsulated ribulose-1,5-bisphosphate carboxylase (RuBisCO, cbbL/cbbS), which leads to slower growth. This chain is Maintenance of carboxysome distribution protein A, found in Gloeobacter kilaueensis (strain ATCC BAA-2537 / CCAP 1431/1 / ULC 316 / JS1).